Consider the following 290-residue polypeptide: S-adenosylmethionine decarboxylase proenzyme (290 aa).

Catalysis depends on serine 138, which acts as the Schiff-base intermediate with substrate; via pyruvic acid. Serine 138 carries the post-translational modification Pyruvic acid (Ser); by autocatalysis. Histidine 143 acts as the Proton acceptor; for processing activity in catalysis. The Proton donor; for catalytic activity role is filled by cysteine 166.

This sequence belongs to the prokaryotic AdoMetDC family. Type 2 subfamily. Heterooctamer of four alpha and four beta chains arranged as a tetramer of alpha/beta heterodimers. Pyruvate serves as cofactor. In terms of processing, is synthesized initially as an inactive proenzyme. Formation of the active enzyme involves a self-maturation process in which the active site pyruvoyl group is generated from an internal serine residue via an autocatalytic post-translational modification. Two non-identical subunits are generated from the proenzyme in this reaction, and the pyruvate is formed at the N-terminus of the alpha chain, which is derived from the carboxyl end of the proenzyme. The post-translation cleavage follows an unusual pathway, termed non-hydrolytic serinolysis, in which the side chain hydroxyl group of the serine supplies its oxygen atom to form the C-terminus of the beta chain, while the remainder of the serine residue undergoes an oxidative deamination to produce ammonia and the pyruvoyl group blocking the N-terminus of the alpha chain.

The catalysed reaction is S-adenosyl-L-methionine + H(+) = S-adenosyl 3-(methylsulfanyl)propylamine + CO2. The protein operates within amine and polyamine biosynthesis; S-adenosylmethioninamine biosynthesis; S-adenosylmethioninamine from S-adenosyl-L-methionine: step 1/1. Functionally, catalyzes the decarboxylation of S-adenosylmethionine to S-adenosylmethioninamine (dcAdoMet), the propylamine donor required for the synthesis of the polyamines spermine and spermidine from the diamine putrescine. The polypeptide is S-adenosylmethionine decarboxylase proenzyme (Heliobacterium modesticaldum (strain ATCC 51547 / Ice1)).